A 579-amino-acid polypeptide reads, in one-letter code: F-box protein At5g39450 (579 aa).

One can recognise an F-box domain in the interval 16–62 (TCLLLSLPEDVIAVIARFVSPRDICNLSLCCKSLCDVVDSERIWLVQ).

This Arabidopsis thaliana (Mouse-ear cress) protein is F-box protein At5g39450.